The following is a 582-amino-acid chain: Proline--tRNA ligase (582 aa).

This sequence belongs to the class-II aminoacyl-tRNA synthetase family. ProS type 1 subfamily. Homodimer.

Its subcellular location is the cytoplasm. It carries out the reaction tRNA(Pro) + L-proline + ATP = L-prolyl-tRNA(Pro) + AMP + diphosphate. Its function is as follows. Catalyzes the attachment of proline to tRNA(Pro) in a two-step reaction: proline is first activated by ATP to form Pro-AMP and then transferred to the acceptor end of tRNA(Pro). As ProRS can inadvertently accommodate and process non-cognate amino acids such as alanine and cysteine, to avoid such errors it has two additional distinct editing activities against alanine. One activity is designated as 'pretransfer' editing and involves the tRNA(Pro)-independent hydrolysis of activated Ala-AMP. The other activity is designated 'posttransfer' editing and involves deacylation of mischarged Ala-tRNA(Pro). The misacylated Cys-tRNA(Pro) is not edited by ProRS. This chain is Proline--tRNA ligase, found in Mycobacterium ulcerans (strain Agy99).